We begin with the raw amino-acid sequence, 41 residues long: Large ribosomal subunit protein bL36 (41 aa).

Belongs to the bacterial ribosomal protein bL36 family.

This chain is Large ribosomal subunit protein bL36, found in Brucella abortus (strain S19).